Here is a 548-residue protein sequence, read N- to C-terminus: CTP synthase (548 aa).

The amidoligase domain stretch occupies residues 1-267 (MKTKFIFITG…DQKIAIMLQL (267 aa)). S14 is a CTP binding site. S14 serves as a coordination point for UTP. Residues 15–20 (SLGKGL) and D72 each bind ATP. 2 residues coordinate Mg(2+): D72 and E141. Residues 148–150 (DIE), 188–193 (KTKPTQ), and K224 each bind CTP. Residues 188-193 (KTKPTQ) and K224 contribute to the UTP site. One can recognise a Glutamine amidotransferase type-1 domain in the interval 292-545 (TIGIVGKYVD…IKAAGKQAVK (254 aa)). L-glutamine is bound at residue G354. C381 functions as the Nucleophile; for glutamine hydrolysis in the catalytic mechanism. L-glutamine contacts are provided by residues 382-385 (LGMQ), E405, and R473. Catalysis depends on residues H518 and E520.

It belongs to the CTP synthase family. In terms of assembly, homotetramer.

It catalyses the reaction UTP + L-glutamine + ATP + H2O = CTP + L-glutamate + ADP + phosphate + 2 H(+). The enzyme catalyses L-glutamine + H2O = L-glutamate + NH4(+). It carries out the reaction UTP + NH4(+) + ATP = CTP + ADP + phosphate + 2 H(+). It functions in the pathway pyrimidine metabolism; CTP biosynthesis via de novo pathway; CTP from UDP: step 2/2. Its activity is regulated as follows. Allosterically activated by GTP, when glutamine is the substrate; GTP has no effect on the reaction when ammonia is the substrate. The allosteric effector GTP functions by stabilizing the protein conformation that binds the tetrahedral intermediate(s) formed during glutamine hydrolysis. Inhibited by the product CTP, via allosteric rather than competitive inhibition. Its function is as follows. Catalyzes the ATP-dependent amination of UTP to CTP with either L-glutamine or ammonia as the source of nitrogen. Regulates intracellular CTP levels through interactions with the four ribonucleotide triphosphates. The polypeptide is CTP synthase (Oleidesulfovibrio alaskensis (strain ATCC BAA-1058 / DSM 17464 / G20) (Desulfovibrio alaskensis)).